Here is a 351-residue protein sequence, read N- to C-terminus: Protein arginine N-methyltransferase 1 (351 aa).

In terms of domain architecture, SAM-dependent MTase PRMT-type spans 30 to 331 (KDYYFDSYAH…KNNRDLDFTV (302 aa)). S-adenosyl-L-methionine is bound by residues histidine 43, arginine 52, glycine 76, glutamate 98, and glutamate 127. Catalysis depends on residues glutamate 142 and glutamate 151.

This sequence belongs to the class I-like SAM-binding methyltransferase superfamily. Protein arginine N-methyltransferase family. In terms of assembly, homodimer. Homooctamer; individual homodimers associates to form a homooctamer and homooligomerization is required for proper localization to the cell membrane. Individual homodimers can associate to form a homohexamer. Component of a complex with lsm14a/rap55a. Interacts with cirbp.

It is found in the nucleus. Its subcellular location is the nucleoplasm. The protein localises to the cytoplasm. The protein resides in the cytosol. It carries out the reaction L-arginyl-[protein] + 2 S-adenosyl-L-methionine = N(omega),N(omega)-dimethyl-L-arginyl-[protein] + 2 S-adenosyl-L-homocysteine + 2 H(+). The catalysed reaction is L-arginyl-[protein] + S-adenosyl-L-methionine = N(omega)-methyl-L-arginyl-[protein] + S-adenosyl-L-homocysteine + H(+). The enzyme catalyses N(omega)-methyl-L-arginyl-[protein] + S-adenosyl-L-methionine = N(omega),N(omega)-dimethyl-L-arginyl-[protein] + S-adenosyl-L-homocysteine + H(+). In terms of biological role, arginine methyltransferase that methylates (mono and asymmetric dimethylation) the guanidino nitrogens of arginyl residues present in target proteins. Constitutes the main enzyme that mediates monomethylation and asymmetric dimethylation of histone H4 'Arg-3' (H4R3me1 and H4R3me2a, respectively), a specific tag for epigenetic transcriptional activation. Methylates ilf3 to regulate its DNA-binding activity. Required for neural induction, playing a key role in the control of epidermal versus neural cell fate choice. Methylates cirbp to regulate its subcellular location. Acts transiently during metamorphosis as a transcription coactivator, enhancing thyroid hormone (T3) receptor (TR)-mediated transcription by enhancing TR binding to the T3 response element (TRE), and histone modification through recruitment of other coactivators. In Xenopus tropicalis (Western clawed frog), this protein is Protein arginine N-methyltransferase 1.